Reading from the N-terminus, the 1374-residue chain is Probable ATP-dependent RNA helicase spindle-E (1374 aa).

The Helicase ATP-binding domain occupies 46–212 (LARIRENPVI…FKTPKKVGYL (167 aa)). Residue 59–66 (GPTGCGKT) coordinates ATP. Residues 158-161 (DEIH) carry the DEAH box motif. Residues 265-447 (VCDRLIENMH…NVILKAKLLE (183 aa)) enclose the Helicase C-terminal domain. Positions 866–931 (QFAVGQMVAA…RKLDGPLAYM (66 aa)) constitute a Tudor domain.

The protein belongs to the DEAD box helicase family. DEAH subfamily.

Its subcellular location is the cytoplasm. The catalysed reaction is ATP + H2O = ADP + phosphate + H(+). In terms of biological role, probable ATP-binding RNA helicase which plays a central role during gametogenesis by repressing transposable elements and preventing their mobilization, which is essential for the germline integrity. Acts via the piRNA metabolic process, which mediates the repression of transposable elements during meiosis by forming complexes composed of piRNAs and Piwi proteins and govern the methylation and subsequent repression of transposons. The protein is Probable ATP-dependent RNA helicase spindle-E (spn-E) of Aedes aegypti (Yellowfever mosquito).